Consider the following 140-residue polypeptide: Midkine (140 aa).

An N-terminal signal peptide occupies residues 1-22; it reads MQHRGFFLLALLALLVVTSAVA. 5 cysteine pairs are disulfide-bonded: Cys34–Cys58, Cys42–Cys67, Cys49–Cys71, Cys81–Cys113, and Cys91–Cys123.

Belongs to the pleiotrophin family. As to quaternary structure, homodimer. Interacts with ALK. Interacts with LRP1; promotes neuronal survival. Interacts with LRP2. Interacts with NCAM1. Interacts (via C-terminal) with PTPRZ1 (via chondroitin sulfate chains); this interaction is inhibited by PTN; this interaction promotes neuronal migration. Interacts with NCL; this interaction promotes NCL clustering and lateral movements of this complex into lipid rafts leading to MDK internalization. Interacts with LRP6 and LRP8: this interaction is calcium dependent. Interacts with ITGA4. Interacts with ITGA6. Interacts with ITGB1. Interacts with ITGA4:ITGB1 complex; this interaction mediates MDK-induced osteoblast cells migration through PXN phosphorylation. Interacts with ITGA6:ITGB1 complex; this interaction mediates MDK-induced neurite outgrowth. Interacts with NOTCH2; this interactio mediates a nuclear accumulation of NOTCH2 and therefore activation of NOTCH2 signaling leading to interaction between HES1 and STAT3. Interacts with GPC2 (via heparan sulfate chain); this interaction is inhibited by heparin followed by chondroitin sulfate E; this interaction induces GPC2 clustering through heparan sulfate chain; this interaction induces neuronal cell adhesion and neurite outgrowth. Interacts with SDC3; this interaction induces SDC3 clustering; this interaction induces neuronal cell adhesion and neurite outgrowth. Interacts with SDC1. Interacts with CSPG5; this interaction promotes elongation of oligodendroglial precursor-like cells. As to expression, expressed in the follicular epithelium and granulosa cells of the ovary.

It localises to the secreted. Functionally, secreted protein that functions as a cytokine and growth factor and mediates its signal through cell-surface proteoglycan and non-proteoglycan receptors. Binds cell-surface proteoglycan receptors via their chondroitin sulfate (CS) groups. Thereby regulates many processes like inflammatory response, cell proliferation, cell adhesion, cell growth, cell survival, tissue regeneration, cell differentiation and cell migration. Participates in inflammatory processes by exerting two different activities. Firstly, mediates neutrophils and macrophages recruitment to the sites of inflammation both by direct action by cooperating namely with ITGB2 via LRP1 and by inducing chemokine expression. This inflammation can be accompanied by epithelial cell survival and smooth muscle cell migration after renal and vessel damage, respectively. Secondly, suppresses the development of tolerogenic dendric cells thereby inhibiting the differentiation of regulatory T cells and also promote T cell expansion through NFAT signaling and Th1 cell differentiation. Promotes tissue regeneration after injury or trauma. After heart damage negatively regulates the recruitment of inflammatory cells and mediates cell survival through activation of anti-apoptotic signaling pathways via MAPKs and AKT pathways through the activation of angiogenesis. Also facilitates liver regeneration as well as bone repair by recruiting macrophage at trauma site and by promoting cartilage development by facilitating chondrocyte differentiation. Plays a role in brain by promoting neural precursor cells survival and growth through interaction with heparan sulfate proteoglycans. Binds PTPRZ1 and promotes neuronal migration and embryonic neurons survival. Binds SDC3 or GPC2 and mediates neurite outgrowth and cell adhesion. Binds chondroitin sulfate E and heparin leading to inhibition of neuronal cell adhesion induced by binding with GPC2. Binds CSPG5 and promotes elongation of oligodendroglial precursor-like cells. Also binds ITGA6:ITGB1 complex; this interaction mediates MDK-induced neurite outgrowth. Binds LRP1; promotes neuronal survival. Binds ITGA4:ITGB1 complex; this interaction mediates MDK-induced osteoblast cells migration through PXN phosphorylation. Binds anaplastic lymphoma kinase (ALK) which induces ALK activation and subsequent phosphorylation of the insulin receptor substrate (IRS1), followed by the activation of mitogen-activated protein kinase (MAPK) and PI3-kinase, and the induction of cell proliferation. Promotes epithelial to mesenchymal transition through interaction with NOTCH2. During arteriogenesis, plays a role in vascular endothelial cell proliferation by inducing VEGFA expression and release which in turn induces nitric oxide synthase expression. Moreover activates vasodilation through nitric oxide synthase activation. Negatively regulates bone formation in response to mechanical load by inhibiting Wnt/beta-catenin signaling in osteoblasts. In addition plays a role in hippocampal development, working memory, auditory response, early fetal adrenal gland development and the female reproductive system. This is Midkine from Mus musculus (Mouse).